We begin with the raw amino-acid sequence, 178 residues long: Interleukin-10 (178 aa).

A signal peptide spans 1–18; that stretch reads MHSSALLCCLVFLTGVRA. Cystine bridges form between cysteine 30–cysteine 126 and cysteine 80–cysteine 132. N-linked (GlcNAc...) asparagine glycosylation is present at asparagine 134.

The protein belongs to the IL-10 family. In terms of assembly, homodimer. Interacts with IL10RA and IL10RB.

Its subcellular location is the secreted. In terms of biological role, major immune regulatory cytokine that acts on many cells of the immune system where it has profound anti-inflammatory functions, limiting excessive tissue disruption caused by inflammation. Mechanistically, IL10 binds to its heterotetrameric receptor comprising IL10RA and IL10RB leading to JAK1 and STAT2-mediated phosphorylation of STAT3. In turn, STAT3 translocates to the nucleus where it drives expression of anti-inflammatory mediators. Targets antigen-presenting cells (APCs) such as macrophages and monocytes and inhibits their release of pro-inflammatory cytokines including granulocyte-macrophage colony-stimulating factor /GM-CSF, granulocyte colony-stimulating factor/G-CSF, IL-1 alpha, IL-1 beta, IL-6, IL-8 and TNF-alpha. Also interferes with antigen presentation by reducing the expression of MHC-class II and co-stimulatory molecules, thereby inhibiting their ability to induce T cell activation. In addition, controls the inflammatory response of macrophages by reprogramming essential metabolic pathways including mTOR signaling. This is Interleukin-10 (IL10) from Saimiri sciureus (Common squirrel monkey).